The following is a 177-amino-acid chain: Large ribosomal subunit protein uL10 (177 aa).

The protein belongs to the universal ribosomal protein uL10 family. In terms of assembly, part of the ribosomal stalk of the 50S ribosomal subunit. The N-terminus interacts with L11 and the large rRNA to form the base of the stalk. The C-terminus forms an elongated spine to which L12 dimers bind in a sequential fashion forming a multimeric L10(L12)X complex.

Functionally, forms part of the ribosomal stalk, playing a central role in the interaction of the ribosome with GTP-bound translation factors. This chain is Large ribosomal subunit protein uL10, found in Thermoanaerobacter sp. (strain X514).